Consider the following 125-residue polypeptide: MAKKKKKQKRQVTKAIVHIHTTFNNTIVNVTDTQGNTIAWASGGTVGFKGTRKSTPYAAQLAAQKAMKEAKEHGVQEVEIWVKGPGAGRESAVRAVFASGVKVTAIRDVTPIPHNGCRPPARRRV.

Belongs to the universal ribosomal protein uS11 family. Part of the 30S ribosomal subunit. Interacts with proteins S7 and S18. Binds to IF-3.

Located on the platform of the 30S subunit, it bridges several disparate RNA helices of the 16S rRNA. Forms part of the Shine-Dalgarno cleft in the 70S ribosome. The protein is Small ribosomal subunit protein uS11 of Aquifex aeolicus (strain VF5).